We begin with the raw amino-acid sequence, 359 residues long: S-adenosylmethionine:tRNA ribosyltransferase-isomerase (359 aa).

This sequence belongs to the QueA family. In terms of assembly, monomer.

Its subcellular location is the cytoplasm. The enzyme catalyses 7-aminomethyl-7-carbaguanosine(34) in tRNA + S-adenosyl-L-methionine = epoxyqueuosine(34) in tRNA + adenine + L-methionine + 2 H(+). It functions in the pathway tRNA modification; tRNA-queuosine biosynthesis. In terms of biological role, transfers and isomerizes the ribose moiety from AdoMet to the 7-aminomethyl group of 7-deazaguanine (preQ1-tRNA) to give epoxyqueuosine (oQ-tRNA). The polypeptide is S-adenosylmethionine:tRNA ribosyltransferase-isomerase (Ralstonia pickettii (strain 12J)).